The primary structure comprises 397 residues: Troponin T, skeletal muscle (397 aa).

Residues 1 to 16 are compositionally biased toward acidic residues; it reads MSDDEEYTSSEEEEVV. Disordered regions lie at residues 1-148, 234-261, and 294-397; these read MSDD…NFTI, ERQK…YPPK, and DSNE…EEEE. Composition is skewed to basic and acidic residues over residues 37–77, 84–129, and 136–148; these read EFIK…LKEK, TRAE…EKKR, and MKDK…NFTI. Composition is skewed to basic and acidic residues over residues 294–307 and 319–329; these read DSNE…KEQY and FGERPGKKAGE. The span at 331–397 shows a compositional bias: acidic residues; that stretch reads ETPEGEEDAK…EEEEEEEEEE (67 aa).

It belongs to the troponin T family. Post-translationally, some glutamate residues are polyglycylated by TTLL3B. This modification occurs exclusively on glutamate residues and results in polyglycine chains on the gamma-carboxyl group. As to expression, isoform 3 is expressed in the hypoderm. Isoform 8 is expressed in the dorsal vessel. Isoform 6 is expressed in adult TDT muscle and isoform 9 in adult IFM, flight and jump muscles.

In terms of biological role, troponin T is the tropomyosin-binding subunit of troponin, the thin filament regulatory complex which confers calcium-sensitivity to striated muscle actomyosin ATPase activity. The chain is Troponin T, skeletal muscle (up) from Drosophila melanogaster (Fruit fly).